Here is an 866-residue protein sequence, read N- to C-terminus: Leucine--tRNA ligase (866 aa).

Positions 42–52 match the 'HIGH' region motif; the sequence is PYPSGKLHMGH. The short motif at 624–628 is the 'KMSKS' region element; the sequence is TMSKS. Lys-627 provides a ligand contact to ATP.

This sequence belongs to the class-I aminoacyl-tRNA synthetase family.

It is found in the cytoplasm. The enzyme catalyses tRNA(Leu) + L-leucine + ATP = L-leucyl-tRNA(Leu) + AMP + diphosphate. The protein is Leucine--tRNA ligase of Nitrosospira multiformis (strain ATCC 25196 / NCIMB 11849 / C 71).